We begin with the raw amino-acid sequence, 641 residues long: UPF0329 protein ECU11_0030 (641 aa).

Positions 358–387 are enriched in basic and acidic residues; the sequence is RQRKREEETERSVKELVGDEEKAKSKEEKA. Residues 358-444 form a disordered region; that stretch reads RQRKREEETE…KGGKKKSKGG (87 aa). The segment covering 435 to 444 has biased composition (basic residues); that stretch reads KGGKKKSKGG.

It belongs to the UPF0329 family.

This is UPF0329 protein ECU11_0030 from Encephalitozoon cuniculi (strain GB-M1) (Microsporidian parasite).